A 513-amino-acid polypeptide reads, in one-letter code: Serine/threonine-protein kinase ppk8 (513 aa).

The span at 98–114 shows a compositional bias: low complexity; that stretch reads LSSTLTSMSEESSSTES. The interval 98–120 is disordered; the sequence is LSSTLTSMSEESSSTESKFATLN. The Protein kinase domain maps to 241 to 505; the sequence is GKLNNVIGEG…ISGARSTTWM (265 aa). ATP contacts are provided by residues 247–255 and lysine 270; that span reads IGEGASSFI. Aspartate 364 serves as the catalytic Proton acceptor.

The protein belongs to the protein kinase superfamily. Ser/Thr protein kinase family.

The protein localises to the cytoplasm. It is found in the nucleus. It carries out the reaction L-seryl-[protein] + ATP = O-phospho-L-seryl-[protein] + ADP + H(+). The catalysed reaction is L-threonyl-[protein] + ATP = O-phospho-L-threonyl-[protein] + ADP + H(+). This Schizosaccharomyces pombe (strain 972 / ATCC 24843) (Fission yeast) protein is Serine/threonine-protein kinase ppk8 (ppk8).